The following is a 513-amino-acid chain: ATP synthase subunit alpha (513 aa).

169–176 (GDRQTGKT) is a binding site for ATP.

This sequence belongs to the ATPase alpha/beta chains family. As to quaternary structure, F-type ATPases have 2 components, CF(1) - the catalytic core - and CF(0) - the membrane proton channel. CF(1) has five subunits: alpha(3), beta(3), gamma(1), delta(1), epsilon(1). CF(0) has three main subunits: a(1), b(2) and c(9-12). The alpha and beta chains form an alternating ring which encloses part of the gamma chain. CF(1) is attached to CF(0) by a central stalk formed by the gamma and epsilon chains, while a peripheral stalk is formed by the delta and b chains.

Its subcellular location is the cell inner membrane. It carries out the reaction ATP + H2O + 4 H(+)(in) = ADP + phosphate + 5 H(+)(out). Produces ATP from ADP in the presence of a proton gradient across the membrane. The alpha chain is a regulatory subunit. The chain is ATP synthase subunit alpha from Pectobacterium carotovorum subsp. carotovorum (strain PC1).